Here is a 247-residue protein sequence, read N- to C-terminus: RNA-free ribonuclease P (247 aa).

Belongs to the HARP family.

The enzyme catalyses Endonucleolytic cleavage of RNA, removing 5'-extranucleotides from tRNA precursor.. Functionally, RNA-free RNase P that catalyzes the removal of the 5'-leader sequence from pre-tRNA to produce the mature 5'-terminus. This chain is RNA-free ribonuclease P, found in Methanosarcina mazei (strain ATCC BAA-159 / DSM 3647 / Goe1 / Go1 / JCM 11833 / OCM 88) (Methanosarcina frisia).